Reading from the N-terminus, the 509-residue chain is UDP-N-acetylmuramoyl-L-alanyl-D-glutamate--2,6-diaminopimelate ligase (509 aa).

Ser32 provides a ligand contact to UDP-N-acetyl-alpha-D-muramoyl-L-alanyl-D-glutamate. Gly117–Thr123 provides a ligand contact to ATP. UDP-N-acetyl-alpha-D-muramoyl-L-alanyl-D-glutamate contacts are provided by residues Thr159–Thr160, Ser186, Gln192, and Arg194. Lys226 is subject to N6-carboxylysine. Meso-2,6-diaminopimelate is bound by residues Arg401, Asp425–Arg428, Gly476, and Glu480. The Meso-diaminopimelate recognition motif motif lies at Asp425–Arg428.

It belongs to the MurCDEF family. MurE subfamily. Mg(2+) is required as a cofactor. Carboxylation is probably crucial for Mg(2+) binding and, consequently, for the gamma-phosphate positioning of ATP.

Its subcellular location is the cytoplasm. It catalyses the reaction UDP-N-acetyl-alpha-D-muramoyl-L-alanyl-D-glutamate + meso-2,6-diaminopimelate + ATP = UDP-N-acetyl-alpha-D-muramoyl-L-alanyl-gamma-D-glutamyl-meso-2,6-diaminopimelate + ADP + phosphate + H(+). Its pathway is cell wall biogenesis; peptidoglycan biosynthesis. Its function is as follows. Catalyzes the addition of meso-diaminopimelic acid to the nucleotide precursor UDP-N-acetylmuramoyl-L-alanyl-D-glutamate (UMAG) in the biosynthesis of bacterial cell-wall peptidoglycan. This chain is UDP-N-acetylmuramoyl-L-alanyl-D-glutamate--2,6-diaminopimelate ligase, found in Prochlorococcus marinus (strain NATL1A).